The following is a 468-amino-acid chain: Adenylyltransferase and sulfurtransferase MOCS3-1 (468 aa).

ATP-binding positions include G111, D132, N139–R143, K156, and D200–N201. Zn(2+) is bound by residues C241 and C244. The active-site Glycyl thioester intermediate; for adenylyltransferase activity is the C258. Zn(2+) contacts are provided by C316 and C319. The region spanning D371–P466 is the Rhodanese domain. C426 acts as the Cysteine persulfide intermediate; for sulfurtransferase activity in catalysis.

In the N-terminal section; belongs to the HesA/MoeB/ThiF family. UBA4 subfamily. The cofactor is Zn(2+).

It localises to the cytoplasm. The enzyme catalyses [molybdopterin-synthase sulfur-carrier protein]-C-terminal Gly-Gly + ATP + H(+) = [molybdopterin-synthase sulfur-carrier protein]-C-terminal Gly-Gly-AMP + diphosphate. It catalyses the reaction [molybdopterin-synthase sulfur-carrier protein]-C-terminal Gly-Gly-AMP + S-sulfanyl-L-cysteinyl-[cysteine desulfurase] + AH2 = [molybdopterin-synthase sulfur-carrier protein]-C-terminal-Gly-aminoethanethioate + L-cysteinyl-[cysteine desulfurase] + A + AMP + 2 H(+). It functions in the pathway tRNA modification; 5-methoxycarbonylmethyl-2-thiouridine-tRNA biosynthesis. Its pathway is cofactor biosynthesis; molybdopterin biosynthesis. Its function is as follows. Plays a central role in 2-thiolation of mcm(5)S(2)U at tRNA wobble positions of cytosolic tRNA(Lys), tRNA(Glu) and tRNA(Gln). Also essential during biosynthesis of the molybdenum cofactor. Acts by mediating the C-terminal thiocarboxylation of sulfur carriers URM1 and MOCS2A. Its N-terminus first activates URM1 and MOCS2A as acyl-adenylates (-COAMP), then the persulfide sulfur on the catalytic cysteine is transferred to URM1 and MOCS2A to form thiocarboxylation (-COSH) of their C-terminus. The reaction probably involves hydrogen sulfide that is generated from the persulfide intermediate and that acts as a nucleophile towards URM1 and MOCS2A. Subsequently, a transient disulfide bond is formed. Does not use thiosulfate as sulfur donor; NFS1 probably acting as a sulfur donor for thiocarboxylation reactions. This is Adenylyltransferase and sulfurtransferase MOCS3-1 from Zea mays (Maize).